Consider the following 1066-residue polypeptide: DNA-directed RNA polymerase subunit beta (1066 aa).

This sequence belongs to the RNA polymerase beta chain family. In plastids the minimal PEP RNA polymerase catalytic core is composed of four subunits: alpha, beta, beta', and beta''. When a (nuclear-encoded) sigma factor is associated with the core the holoenzyme is formed, which can initiate transcription.

Its subcellular location is the plastid. It localises to the chloroplast. The catalysed reaction is RNA(n) + a ribonucleoside 5'-triphosphate = RNA(n+1) + diphosphate. DNA-dependent RNA polymerase catalyzes the transcription of DNA into RNA using the four ribonucleoside triphosphates as substrates. The protein is DNA-directed RNA polymerase subunit beta of Psilotum nudum (Whisk fern).